The following is a 641-amino-acid chain: Threonine--tRNA ligase (641 aa).

The TGS domain maps to 1-61; that stretch reads MPVITLPDGS…ENDTELAIVT (61 aa). Residues 242 to 533 form a catalytic region; sequence DHRKIGKKLG…LIEEYEGAFP (292 aa). The Zn(2+) site is built by C333, H384, and H510.

It belongs to the class-II aminoacyl-tRNA synthetase family. In terms of assembly, homodimer. The cofactor is Zn(2+).

The protein resides in the cytoplasm. It catalyses the reaction tRNA(Thr) + L-threonine + ATP = L-threonyl-tRNA(Thr) + AMP + diphosphate + H(+). Catalyzes the attachment of threonine to tRNA(Thr) in a two-step reaction: L-threonine is first activated by ATP to form Thr-AMP and then transferred to the acceptor end of tRNA(Thr). Also edits incorrectly charged L-seryl-tRNA(Thr). The protein is Threonine--tRNA ligase of Marinobacter nauticus (strain ATCC 700491 / DSM 11845 / VT8) (Marinobacter aquaeolei).